We begin with the raw amino-acid sequence, 330 residues long: Olfactory receptor 5P70 (330 aa).

The Extracellular segment spans residues 1 to 28; that stretch reads MAFLEDGNHTIVTEFILLGLTDDPVLRD. A glycan (N-linked (GlcNAc...) asparagine) is linked at Asn8. A helical membrane pass occupies residues 29–49; sequence ILFTIILCIYLVTVSGNLSTI. At 50–57 the chain is on the cytoplasmic side; it reads LLIRVSSQ. The helical transmembrane segment at 58-78 threads the bilayer; sequence LHHPMYFFLSHLASVDIGISS. The Extracellular portion of the chain corresponds to 79 to 102; the sequence is SVTPNMLANFLVKPNTISYIGCSI. Cys100 and Cys192 are disulfide-bonded. The chain crosses the membrane as a helical span at residues 103 to 123; that stretch reads QFTSAVFLATVECFLLAAMAY. Topologically, residues 124 to 136 are cytoplasmic; that stretch reads DRFVAICNPLLYS. The chain crosses the membrane as a helical span at residues 137–157; it reads TKMSREACIQLVVGSYIQGLL. Residues 158-199 are Extracellular-facing; that stretch reads NASFFTLSFFSLIFCGPNRINHFYCDLAPLVELSCSDVTLAV. The chain crosses the membrane as a helical span at residues 200-220; the sequence is VITSISAGFITLTTVFVIAIS. Over 221 to 240 the chain is Cytoplasmic; that stretch reads YSCIFITIMKMHSTESRYKA. The chain crosses the membrane as a helical span at residues 241–261; sequence FSTCTSHLTAVTLFYGTTMFI. Over 262-274 the chain is Extracellular; sequence YVMPKSSYSTDQN. Residues 275–295 form a helical membrane-spanning segment; it reads KVLSVFYMVVIPMLNPLIYSL. Topologically, residues 296–330 are cytoplasmic; it reads RNNEIKGALKRYLGKKIFSYGNLFCKTHYNDTHQV.

Belongs to the G-protein coupled receptor 1 family.

The protein localises to the cell membrane. In terms of biological role, potential odorant receptor. This chain is Olfactory receptor 5P70, found in Mus musculus (Mouse).